Reading from the N-terminus, the 326-residue chain is Protein farnesyltransferase/geranylgeranyltransferase type-1 subunit alpha (326 aa).

PFTA repeat units lie at residues 55-89 (RSPRALRLTEETLLLNSGNYTVWHFRRLVLEALNH), 90-124 (DLFEELEFIERIAEDNSKNYQLWHHRRWVAEKLGP), 126-160 (VAGRELEFTRRVLSLDAKHYHAWSHRQWTLRALGG), 161-194 (WEDELDYCHELLEADVFNNSAWNQRYYVITQSPL), and 201-235 (MRESEVSYTIKAILTNPANESSWRYLKALYKDDKE).

This sequence belongs to the protein prenyltransferase subunit alpha family. Heterodimer of an alpha and a beta subunit. The cofactor is Mg(2+).

It carries out the reaction L-cysteinyl-[protein] + (2E,6E)-farnesyl diphosphate = S-(2E,6E)-farnesyl-L-cysteinyl-[protein] + diphosphate. The catalysed reaction is geranylgeranyl diphosphate + L-cysteinyl-[protein] = S-geranylgeranyl-L-cysteinyl-[protein] + diphosphate. In terms of biological role, essential subunit of both the farnesyltransferase and the geranylgeranyltransferase complex. Contributes to the transfer of a farnesyl or geranylgeranyl moiety from farnesyl or geranylgeranyl diphosphate to a cysteine at the fourth position from the C-terminus of several proteins having the C-terminal sequence Cys-aliphatic-aliphatic-X. This chain is Protein farnesyltransferase/geranylgeranyltransferase type-1 subunit alpha (FTA), found in Arabidopsis thaliana (Mouse-ear cress).